We begin with the raw amino-acid sequence, 245 residues long: Small ribosomal subunit protein uS2 (245 aa).

Belongs to the universal ribosomal protein uS2 family.

The protein is Small ribosomal subunit protein uS2 of Pseudomonas entomophila (strain L48).